The primary structure comprises 156 residues: Peptide deformylase 1 (156 aa).

The Fe cation site is built by Cys-90 and His-132. The active site involves Glu-133. His-136 is a Fe cation binding site.

It belongs to the polypeptide deformylase family. Requires Fe(2+) as cofactor.

The catalysed reaction is N-terminal N-formyl-L-methionyl-[peptide] + H2O = N-terminal L-methionyl-[peptide] + formate. Removes the formyl group from the N-terminal Met of newly synthesized proteins. Requires at least a dipeptide for an efficient rate of reaction. N-terminal L-methionine is a prerequisite for activity but the enzyme has broad specificity at other positions. This chain is Peptide deformylase 1, found in Bacillus cereus (strain ATCC 14579 / DSM 31 / CCUG 7414 / JCM 2152 / NBRC 15305 / NCIMB 9373 / NCTC 2599 / NRRL B-3711).